A 629-amino-acid polypeptide reads, in one-letter code: tRNA uridine 5-carboxymethylaminomethyl modification enzyme MnmG (629 aa).

Residues 13-18, Val-125, and Ser-180 contribute to the FAD site; that span reads GGGHAG. 273-287 is a binding site for NAD(+); the sequence is GPRYCPSIEDKVMRF. Gln-370 contributes to the FAD binding site.

Belongs to the MnmG family. In terms of assembly, homodimer. Heterotetramer of two MnmE and two MnmG subunits. FAD is required as a cofactor.

The protein localises to the cytoplasm. Its function is as follows. NAD-binding protein involved in the addition of a carboxymethylaminomethyl (cmnm) group at the wobble position (U34) of certain tRNAs, forming tRNA-cmnm(5)s(2)U34. In Salmonella paratyphi C (strain RKS4594), this protein is tRNA uridine 5-carboxymethylaminomethyl modification enzyme MnmG.